The following is a 383-amino-acid chain: 3-dehydroquinate synthase (383 aa).

Residues 81–86 (EGEVSK), 115–119 (GVVGD), 139–140 (TS), K152, and K161 contribute to the NAD(+) site. Zn(2+) is bound by residues E194, H256, and H274.

Belongs to the sugar phosphate cyclases superfamily. Dehydroquinate synthase family. Co(2+) is required as a cofactor. Requires Zn(2+) as cofactor. The cofactor is NAD(+).

The protein resides in the cytoplasm. It carries out the reaction 7-phospho-2-dehydro-3-deoxy-D-arabino-heptonate = 3-dehydroquinate + phosphate. Its pathway is metabolic intermediate biosynthesis; chorismate biosynthesis; chorismate from D-erythrose 4-phosphate and phosphoenolpyruvate: step 2/7. Its function is as follows. Catalyzes the conversion of 3-deoxy-D-arabino-heptulosonate 7-phosphate (DAHP) to dehydroquinate (DHQ). This Nitrobacter winogradskyi (strain ATCC 25391 / DSM 10237 / CIP 104748 / NCIMB 11846 / Nb-255) protein is 3-dehydroquinate synthase.